Consider the following 173-residue polypeptide: ATP synthase subunit b (173 aa).

A helical transmembrane segment spans residues L12–V32.

This sequence belongs to the ATPase B chain family. As to quaternary structure, F-type ATPases have 2 components, F(1) - the catalytic core - and F(0) - the membrane proton channel. F(1) has five subunits: alpha(3), beta(3), gamma(1), delta(1), epsilon(1). F(0) has three main subunits: a(1), b(2) and c(10-14). The alpha and beta chains form an alternating ring which encloses part of the gamma chain. F(1) is attached to F(0) by a central stalk formed by the gamma and epsilon chains, while a peripheral stalk is formed by the delta and b chains.

It localises to the cell inner membrane. Functionally, f(1)F(0) ATP synthase produces ATP from ADP in the presence of a proton or sodium gradient. F-type ATPases consist of two structural domains, F(1) containing the extramembraneous catalytic core and F(0) containing the membrane proton channel, linked together by a central stalk and a peripheral stalk. During catalysis, ATP synthesis in the catalytic domain of F(1) is coupled via a rotary mechanism of the central stalk subunits to proton translocation. Component of the F(0) channel, it forms part of the peripheral stalk, linking F(1) to F(0). The protein is ATP synthase subunit b of Leptospira interrogans serogroup Icterohaemorrhagiae serovar copenhageni (strain Fiocruz L1-130).